Consider the following 61-residue polypeptide: Adipokinetic prohormone type 2 (61 aa).

An N-terminal signal peptide occupies residues 1 to 22 (MTQSCTLTLVLVVAVLAALATA). The residue at position 23 (Gln-23) is a Pyrrolidone carboxylic acid. Trp-30 bears the Tryptophan amide mark.

The protein belongs to the AKH/HRTH/RPCH family. In terms of assembly, adipokinetic hormone precursor-related peptide (APRP) can form three type of disulfide-bond dimers: p1 (alpha-alpha), p2 (alpha-beta), and p3 (beta-beta).

The protein resides in the secreted. This hormone, released from cells in the corpora cardiaca, causes release of diglycerides from the fat body and stimulation of muscles to use these diglycerides as an energy source during energy-demanding processes. This Locusta migratoria (Migratory locust) protein is Adipokinetic prohormone type 2.